The primary structure comprises 124 residues: Large ribosomal subunit protein bL17 (124 aa).

It belongs to the bacterial ribosomal protein bL17 family. As to quaternary structure, part of the 50S ribosomal subunit. Contacts protein L32.

The sequence is that of Large ribosomal subunit protein bL17 from Trichlorobacter lovleyi (strain ATCC BAA-1151 / DSM 17278 / SZ) (Geobacter lovleyi).